We begin with the raw amino-acid sequence, 270 residues long: 4-hydroxy-tetrahydrodipicolinate reductase (270 aa).

Residues 11–16 (GAGGRM) and Glu37 contribute to the NAD(+) site. Arg38 serves as a coordination point for NADP(+). NAD(+)-binding positions include 101–103 (GTT) and 125–128 (APNM). The active-site Proton donor/acceptor is His158. His159 contacts (S)-2,3,4,5-tetrahydrodipicolinate. Lys162 functions as the Proton donor in the catalytic mechanism. Position 168–169 (168–169 (GT)) interacts with (S)-2,3,4,5-tetrahydrodipicolinate.

This sequence belongs to the DapB family.

Its subcellular location is the cytoplasm. The catalysed reaction is (S)-2,3,4,5-tetrahydrodipicolinate + NAD(+) + H2O = (2S,4S)-4-hydroxy-2,3,4,5-tetrahydrodipicolinate + NADH + H(+). It catalyses the reaction (S)-2,3,4,5-tetrahydrodipicolinate + NADP(+) + H2O = (2S,4S)-4-hydroxy-2,3,4,5-tetrahydrodipicolinate + NADPH + H(+). It functions in the pathway amino-acid biosynthesis; L-lysine biosynthesis via DAP pathway; (S)-tetrahydrodipicolinate from L-aspartate: step 4/4. Its function is as follows. Catalyzes the conversion of 4-hydroxy-tetrahydrodipicolinate (HTPA) to tetrahydrodipicolinate. The polypeptide is 4-hydroxy-tetrahydrodipicolinate reductase (Shewanella sp. (strain MR-4)).